The chain runs to 380 residues: Protein Wnt-5a (380 aa).

The N-terminal stretch at 1–35 (MKKSIGILSPGVALGTAGSAMSSKFFVMALAVFFS) is a signal peptide. A propeptide spanning residues 36-61 (FAQVVIEANSWWSLGMNNPVQMSEVY) is cleaved from the precursor. A disulfide bridge links Cys104 with Cys115. N-linked (GlcNAc...) asparagine glycosylation is found at Asn114 and Asn120. 10 disulfide bridges follow: Cys154–Cys162, Cys164–Cys182, Cys238–Cys252, Cys240–Cys247, Cys309–Cys340, Cys325–Cys335, Cys339–Cys379, Cys355–Cys370, Cys357–Cys367, and Cys362–Cys363. Residue Ser244 is the site of O-palmitoleoyl serine; by PORCN attachment. Residues Asn312 and Asn326 are each glycosylated (N-linked (GlcNAc...) asparagine).

It belongs to the Wnt family. Forms a soluble 1:1 complex with AFM; this prevents oligomerization and is required for prolonged biological activity. The complex with AFM may represent the physiological form in body fluids. Homooligomer; disulfide-linked, leading to inactivation (in vitro). Interacts with PORCN. Interacts with WLS. Interacts with glypican GCP3. Interacts with PKD1 (via extracellular domain). Interacts with TMEM67. In terms of processing, glycosylation is necessary for secretion but not for activity. Post-translationally, palmitoleoylation is required for efficient binding to frizzled receptors. Depalmitoleoylation leads to Wnt signaling pathway inhibition. Proteolytic processing by TIKI1 and TIKI2 promotes oxidation and formation of large disulfide-bond oligomers, leading to inactivation of WNT5A.

It is found in the secreted. The protein localises to the extracellular space. It localises to the extracellular matrix. Ligand for members of the frizzled family of seven transmembrane receptors. Can activate or inhibit canonical Wnt signaling, depending on receptor context. In the presence of FZD4, activates beta-catenin signaling. In the presence of ROR2, inhibits the canonical Wnt pathway by promoting beta-catenin degradation through a GSK3-independent pathway which involves down-regulation of beta-catenin-induced reporter gene expression. Suppression of the canonical pathway allows chondrogenesis to occur. Inhibits tumor formation. Stimulates cell migration. Decreases proliferation, migration, invasiveness and clonogenicity of carcinoma cells and may act as a tumor suppressor. Mediates motility of melanoma cells. Required during embryogenesis for extension of the primary anterior-posterior axis and for outgrowth of limbs and the genital tubercle. Inhibits type II collagen expression in chondrocytes. The sequence is that of Protein Wnt-5a from Oryctolagus cuniculus (Rabbit).